The chain runs to 216 residues: Small ribosomal subunit protein uS3 (216 aa).

Residues 24-93 (IKEFLEYRLA…NPQIDVIDVS (70 aa)) form the KH type-2 domain.

This sequence belongs to the universal ribosomal protein uS3 family. Part of the 30S ribosomal subunit.

Binds the lower part of the 30S subunit head. The sequence is that of Small ribosomal subunit protein uS3 from Pyrobaculum calidifontis (strain DSM 21063 / JCM 11548 / VA1).